The sequence spans 942 residues: Glutamyl aminopeptidase (942 aa).

The Cytoplasmic portion of the chain corresponds to 1–14; sequence MSTDSKRYCIKTKH. A helical; Signal-anchor for type II membrane protein transmembrane segment spans residues 15–35; sequence VAIICAAVVAVGLIVGLSVGL. Over 36–942 the chain is Extracellular; that stretch reads TRSCDSKDGG…RDTIRDWFFN (907 aa). The interval 40-74 is disordered; that stretch reads DSKDGGQGTTQSPSHLPPTSSPPQDQGVCPASEDE. 3 N-linked (GlcNAc...) asparagine glycosylation sites follow: Asn-110, Asn-114, and Asn-187. Residue Glu-213 coordinates substrate. Asn-314 is a glycosylation site (N-linked (GlcNAc...) asparagine). A substrate-binding site is contributed by 347-351; the sequence is GAMEN. Asn-367 carries an N-linked (GlcNAc...) asparagine glycan. Residue His-383 participates in Zn(2+) binding. The active-site Proton acceptor is the Glu-384. Zn(2+) is bound by residues His-387 and Glu-406. 9 N-linked (GlcNAc...) asparagine glycosylation sites follow: Asn-557, Asn-579, Asn-587, Asn-597, Asn-632, Asn-668, Asn-753, Asn-786, and Asn-791. Arg-877 lines the substrate pocket.

It belongs to the peptidase M1 family. In terms of assembly, homodimer; disulfide-linked. The cofactor is Zn(2+).

It is found in the cell membrane. It carries out the reaction Release of N-terminal glutamate (and to a lesser extent aspartate) from a peptide.. With respect to regulation, substrate specificity is modulated by calcium which enhances the enzymatic activity for cleavage of acidic residues while reducing its activity with basic residues. Inhibited by aminopeptidase inhibitors amastatin and bestatin. Regulates central hypertension through its calcium-modulated preference to cleave N-terminal acidic residues from peptides such as angiotensin II. The sequence is that of Glutamyl aminopeptidase (ENPEP) from Sus scrofa (Pig).